Consider the following 216-residue polypeptide: Large ribosomal subunit protein uL3 (216 aa).

N5-methylglutamine is present on Gln153.

This sequence belongs to the universal ribosomal protein uL3 family. As to quaternary structure, part of the 50S ribosomal subunit. Forms a cluster with proteins L14 and L19. In terms of processing, methylated by PrmB.

In terms of biological role, one of the primary rRNA binding proteins, it binds directly near the 3'-end of the 23S rRNA, where it nucleates assembly of the 50S subunit. This is Large ribosomal subunit protein uL3 from Burkholderia ambifaria (strain MC40-6).